The primary structure comprises 312 residues: DNA-directed RNA polymerase subunit alpha (312 aa).

An alpha N-terminal domain (alpha-NTD) region spans residues 1–226 (MIEFEKPNIT…EHFKVFESAD (226 aa)). The interval 243 to 312 (KEKKLEMTIE…DLGLSLRQED (70 aa)) is alpha C-terminal domain (alpha-CTD).

This sequence belongs to the RNA polymerase alpha chain family. In terms of assembly, homodimer. The RNAP catalytic core consists of 2 alpha, 1 beta, 1 beta' and 1 omega subunit. When a sigma factor is associated with the core the holoenzyme is formed, which can initiate transcription.

The catalysed reaction is RNA(n) + a ribonucleoside 5'-triphosphate = RNA(n+1) + diphosphate. Its function is as follows. DNA-dependent RNA polymerase catalyzes the transcription of DNA into RNA using the four ribonucleoside triphosphates as substrates. The protein is DNA-directed RNA polymerase subunit alpha of Lactobacillus acidophilus (strain ATCC 700396 / NCK56 / N2 / NCFM).